Reading from the N-terminus, the 112-residue chain is Large ribosomal subunit protein eL31 (112 aa).

The protein belongs to the eukaryotic ribosomal protein eL31 family. Component of the large ribosomal subunit. Mature ribosomes consist of a small (40S) and a large (60S) subunit. The 40S subunit contains about 32 different proteins and 1 molecule of RNA (18S). The 60S subunit contains 45 different proteins and 3 molecules of RNA (25S, 5.8S and 5S).

It is found in the cytoplasm. Functionally, component of the ribosome, a large ribonucleoprotein complex responsible for the synthesis of proteins in the cell. The small ribosomal subunit (SSU) binds messenger RNAs (mRNAs) and translates the encoded message by selecting cognate aminoacyl-transfer RNA (tRNA) molecules. The large subunit (LSU) contains the ribosomal catalytic site termed the peptidyl transferase center (PTC), which catalyzes the formation of peptide bonds, thereby polymerizing the amino acids delivered by tRNAs into a polypeptide chain. The nascent polypeptides leave the ribosome through a tunnel in the LSU and interact with protein factors that function in enzymatic processing, targeting, and the membrane insertion of nascent chains at the exit of the ribosomal tunnel. This is Large ribosomal subunit protein eL31 from Candida albicans (strain SC5314 / ATCC MYA-2876) (Yeast).